Reading from the N-terminus, the 512-residue chain is Ribose import ATP-binding protein RbsA 2 (512 aa).

2 consecutive ABC transporter domains span residues 7 to 242 and 257 to 498; these read LEIR…VGRE and LGEP…SGIG. 39–46 lines the ATP pocket; sequence GENGAGKS.

It belongs to the ABC transporter superfamily. Ribose importer (TC 3.A.1.2.1) family. The complex is composed of an ATP-binding protein (RbsA), two transmembrane proteins (RbsC) and a solute-binding protein (RbsB).

The protein localises to the cell inner membrane. It catalyses the reaction D-ribose(out) + ATP + H2O = D-ribose(in) + ADP + phosphate + H(+). Functionally, part of the ABC transporter complex RbsABC involved in ribose import. Responsible for energy coupling to the transport system. The protein is Ribose import ATP-binding protein RbsA 2 of Rhizobium meliloti (strain 1021) (Ensifer meliloti).